A 91-amino-acid chain; its full sequence is Cell division protein FtsB (91 aa).

Topologically, residues 1 to 3 (MRW) are cytoplasmic. The helical transmembrane segment at 4–21 (PLIVLAVLVIVLQYPLWL) threads the bilayer. Residues 22–91 (GKGGWLRVWD…EIFVHTPRKP (70 aa)) lie on the Periplasmic side of the membrane. Residues 28–74 (RVWDVDRQLQAQRETNQRLEQRNAGLEAEVRDLKSGNEAVEERARFE) adopt a coiled-coil conformation.

The protein belongs to the FtsB family. As to quaternary structure, part of a complex composed of FtsB, FtsL and FtsQ.

It localises to the cell inner membrane. Its function is as follows. Essential cell division protein. May link together the upstream cell division proteins, which are predominantly cytoplasmic, with the downstream cell division proteins, which are predominantly periplasmic. In Aromatoleum aromaticum (strain DSM 19018 / LMG 30748 / EbN1) (Azoarcus sp. (strain EbN1)), this protein is Cell division protein FtsB.